A 247-amino-acid chain; its full sequence is MFMTRSEYDRGVNTFSPEGRLFQVEYAIEAIKLGSTAIGVKTKDAVVLGVEKRLTSPLMESHSVEKLFEIDSHIGCAISGLTADARTIIEHARVQTQNHRFTYDEPQGIESTTQSICDLALRFGEGEDGEERIMSRPFGVALLIAGIDEHGPQLYHSEPSGTYFRYEAKAIGSGSEPAKSELVKEFHKDMTLEEAEVLILKVLRQVMEEKLDSKNVQLAKVTAEGGFHIYNDEEMADAVAREQQRMD.

At T55 the chain carries Phosphothreonine.

This sequence belongs to the peptidase T1A family. The 26S proteasome consists of a 20S proteasome core and two 19S regulatory subunits. The 20S proteasome core is composed of 28 subunits that are arranged in four stacked rings, resulting in a barrel-shaped structure. The two end rings are each formed by seven alpha subunits, and the two central rings are each formed by seven beta subunits. The catalytic chamber with the active sites is on the inside of the barrel.

It is found in the cytoplasm. It localises to the nucleus. The proteasome is a multicatalytic proteinase complex which is characterized by its ability to cleave peptides with Arg, Phe, Tyr, Leu, and Glu adjacent to the leaving group at neutral or slightly basic pH. The proteasome has an ATP-dependent proteolytic activity. In Schizosaccharomyces pombe (strain 972 / ATCC 24843) (Fission yeast), this protein is Probable proteasome subunit alpha type-5 (pup2).